A 296-amino-acid chain; its full sequence is NAD kinase (296 aa).

Residue D74 is the Proton acceptor of the active site. Residues D74 to G75, N148 to D149, R176, D178, and T189 to S194 contribute to the NAD(+) site.

This sequence belongs to the NAD kinase family. Requires a divalent metal cation as cofactor.

It localises to the cytoplasm. The catalysed reaction is NAD(+) + ATP = ADP + NADP(+) + H(+). Functionally, involved in the regulation of the intracellular balance of NAD and NADP, and is a key enzyme in the biosynthesis of NADP. Catalyzes specifically the phosphorylation on 2'-hydroxyl of the adenosine moiety of NAD to yield NADP. The protein is NAD kinase of Nitrosomonas europaea (strain ATCC 19718 / CIP 103999 / KCTC 2705 / NBRC 14298).